The chain runs to 92 residues: Larval cuticle protein 9 (92 aa).

The signal sequence occupies residues 1–16 (MKFVIVLACLLAVVFA). Positions 31–92 (LLDFNYAYEL…TGYHPKVVEA (62 aa)) constitute a Chitin-binding type R&amp;R domain.

In terms of biological role, component of the cuticle of the larva. This Drosophila melanogaster (Fruit fly) protein is Larval cuticle protein 9 (Lcp9).